We begin with the raw amino-acid sequence, 196 residues long: MSKEGLIAAKELKRLQTQSVRLDRFIGSHVSRLLKSDLVSVLAEFQRQNQVFLCMKLYEVVRREIWYRPDMFFYRDMLMMLARNKKVDETKKVWEDLKKEEVLFDQHTFGDLVRGFLDNELPLEAMRLYGEMRESPDRPLSLPFRVILKGLVPYPELREKVKDDFLELFPGMIVYDPPEDICEDSDEEARTDSDLE.

PPR repeat units follow at residues Asp-70–Phe-104 and Asp-105–Pro-139.

The protein belongs to the PPR family. P subfamily.

This Arabidopsis thaliana (Mouse-ear cress) protein is Pentatricopeptide repeat-containing protein At1g62350.